We begin with the raw amino-acid sequence, 1114 residues long: Filamentous growth regulator 23 (1114 aa).

The signal sequence occupies residues 1–21; the sequence is MFASYLLLVLWIIRLVPTTHA. Disordered regions lie at residues 232-256 and 284-314; these read GSETFVPPTTAPKPVETPSPEPSTT and SSSIEFSTSTQESSSIGPSSSSSIGSCTSSS. Residues 240–252 show a composition bias toward pro residues; sequence TTAPKPVETPSPE. 11 N-linked (GlcNAc...) asparagine glycosylation sites follow: Asn-382, Asn-397, Asn-475, Asn-490, Asn-506, Asn-539, Asn-565, Asn-591, Asn-637, Asn-687, and Asn-739. Residues 392 to 430 are disordered; sequence SETTTNESSSYTDEPSSSEEITNTYEPSSSTESSTTDQF. A disordered region spans residues 764-784; the sequence is TSTLTSSHTSDNEKPASLSSS. N-linked (GlcNAc...) asparagine glycosylation occurs at Asn-831. Composition is skewed to low complexity over residues 844–910 and 922–941; these read SASS…SSSS and SSSVSSTSSTTSSPSTESSS. The tract at residues 844 to 963 is disordered; it reads SASSSYHSSE…ANENTSEITT (120 aa). Polar residues predominate over residues 942 to 963; the sequence is NGLVSTVTESSTANENTSEITT. Asn-957, Asn-966, and Asn-1070 each carry an N-linked (GlcNAc...) asparagine glycan. The GPI-anchor amidated asparagine moiety is linked to residue Asn-1089. Positions 1090-1114 are cleaved as a propeptide — removed in mature form; the sequence is ANSLGLKNGDNSWIIGIMMIGLLMI.

Its subcellular location is the cell membrane. In terms of biological role, putative adhesin which may be involved in cell adhesion and virulence. Involved in the regulation of filamentous growth. The sequence is that of Filamentous growth regulator 23 (FGR23) from Candida albicans (strain SC5314 / ATCC MYA-2876) (Yeast).